A 153-amino-acid polypeptide reads, in one-letter code: 6,7-dimethyl-8-ribityllumazine synthase (153 aa).

Residues phenylalanine 22, 56 to 58 (AFE), and 80 to 82 (TVI) contribute to the 5-amino-6-(D-ribitylamino)uracil site. Residue 85–86 (ST) coordinates (2S)-2-hydroxy-3-oxobutyl phosphate. The active-site Proton donor is histidine 88. Phenylalanine 113 is a 5-amino-6-(D-ribitylamino)uracil binding site. Arginine 127 is a (2S)-2-hydroxy-3-oxobutyl phosphate binding site.

The protein belongs to the DMRL synthase family. As to quaternary structure, forms an icosahedral capsid composed of 60 subunits, arranged as a dodecamer of pentamers.

The enzyme catalyses (2S)-2-hydroxy-3-oxobutyl phosphate + 5-amino-6-(D-ribitylamino)uracil = 6,7-dimethyl-8-(1-D-ribityl)lumazine + phosphate + 2 H2O + H(+). It functions in the pathway cofactor biosynthesis; riboflavin biosynthesis; riboflavin from 2-hydroxy-3-oxobutyl phosphate and 5-amino-6-(D-ribitylamino)uracil: step 1/2. Functionally, catalyzes the formation of 6,7-dimethyl-8-ribityllumazine by condensation of 5-amino-6-(D-ribitylamino)uracil with 3,4-dihydroxy-2-butanone 4-phosphate. This is the penultimate step in the biosynthesis of riboflavin. This Actinobacillus pleuropneumoniae (Haemophilus pleuropneumoniae) protein is 6,7-dimethyl-8-ribityllumazine synthase.